We begin with the raw amino-acid sequence, 303 residues long: Putative ring-cleaving dioxygenase MhqE (303 aa).

VOC domains follow at residues 5-129 (GLHH…IMED) and 150-266 (GMKG…IATD). Fe cation contacts are provided by His8, His215, and Glu262.

Belongs to the extradiol ring-cleavage dioxygenase family. It depends on Fe(2+) as a cofactor.

The protein localises to the cytoplasm. In terms of biological role, putative ring-cleavage dioxygenase that may contribute to the degradation of aromatic compounds. In Bacillus subtilis (strain 168), this protein is Putative ring-cleaving dioxygenase MhqE (mhqE).